The chain runs to 435 residues: Tryptophan--tRNA ligase (435 aa).

ATP is bound by residues 10 to 12 (TTS) and 18 to 19 (GN). Positions 11–19 (TSGTPHLGN) match the 'HIGH' region motif. Asp143 provides a ligand contact to L-tryptophan. ATP-binding positions include 155–157 (GRD), Leu195, and 202–206 (KMSKS). Residues 202–206 (KMSKS) carry the 'KMSKS' region motif.

The protein belongs to the class-I aminoacyl-tRNA synthetase family. In terms of assembly, homodimer.

Its subcellular location is the cytoplasm. The enzyme catalyses tRNA(Trp) + L-tryptophan + ATP = L-tryptophyl-tRNA(Trp) + AMP + diphosphate + H(+). Catalyzes the attachment of tryptophan to tRNA(Trp). The polypeptide is Tryptophan--tRNA ligase (Xylella fastidiosa (strain Temecula1 / ATCC 700964)).